We begin with the raw amino-acid sequence, 562 residues long: tRNA (guanine(37)-N(1))-methyltransferase (562 aa).

The N-terminal 41 residues, 1–41 (MLFRRFLNLTTKTPHLQTFRARHYFRNMSCPELIPPPTVRG), are a transit peptide targeting the mitochondrion. Residues H243, 281–282 (DL), and N340 each bind S-adenosyl-L-methionine. Residues 523–534 (AHIVAKKPEKKP) show a composition bias toward basic and acidic residues. The tract at residues 523 to 562 (AHIVAKKPEKKPLPAKPASKKNKNQANTKQVEAGLDKMQM) is disordered.

Belongs to the class I-like SAM-binding methyltransferase superfamily. TRM5/TYW2 family. Monomer.

The protein resides in the mitochondrion matrix. It localises to the nucleus. It is found in the cytoplasm. It catalyses the reaction guanosine(37) in tRNA + S-adenosyl-L-methionine = N(1)-methylguanosine(37) in tRNA + S-adenosyl-L-homocysteine + H(+). Functionally, specifically methylates the N1 position of guanosine-37 in various cytoplasmic and mitochondrial tRNAs. Methylation is not dependent on the nature of the nucleoside 5' of the target nucleoside. This is the first step in the biosynthesis of wybutosine (yW), a modified base adjacent to the anticodon of tRNAs and required for accurate decoding. The protein is tRNA (guanine(37)-N(1))-methyltransferase of Aedes aegypti (Yellowfever mosquito).